A 187-amino-acid chain; its full sequence is Peptidyl-tRNA hydrolase (187 aa).

Y15 contributes to the tRNA binding site. H20 serves as the catalytic Proton acceptor. TRNA-binding residues include F65, N67, and N113.

Belongs to the PTH family. Monomer.

The protein localises to the cytoplasm. The catalysed reaction is an N-acyl-L-alpha-aminoacyl-tRNA + H2O = an N-acyl-L-amino acid + a tRNA + H(+). Functionally, hydrolyzes ribosome-free peptidyl-tRNAs (with 1 or more amino acids incorporated), which drop off the ribosome during protein synthesis, or as a result of ribosome stalling. Catalyzes the release of premature peptidyl moieties from peptidyl-tRNA molecules trapped in stalled 50S ribosomal subunits, and thus maintains levels of free tRNAs and 50S ribosomes. This is Peptidyl-tRNA hydrolase from Elusimicrobium minutum (strain Pei191).